Reading from the N-terminus, the 428-residue chain is 3-phosphoshikimate 1-carboxyvinyltransferase (428 aa).

3-phosphoshikimate-binding residues include Lys-22, Ser-23, and Arg-27. Residue Lys-22 coordinates phosphoenolpyruvate. Phosphoenolpyruvate-binding residues include Gly-96 and Arg-124. Positions 169, 170, 171, 197, 313, 336, and 340 each coordinate 3-phosphoshikimate. Position 171 (Gln-171) interacts with phosphoenolpyruvate. Asp-313 (proton acceptor) is an active-site residue. Arg-344, Arg-386, and Lys-411 together coordinate phosphoenolpyruvate.

This sequence belongs to the EPSP synthase family. In terms of assembly, monomer.

It is found in the cytoplasm. The catalysed reaction is 3-phosphoshikimate + phosphoenolpyruvate = 5-O-(1-carboxyvinyl)-3-phosphoshikimate + phosphate. It participates in metabolic intermediate biosynthesis; chorismate biosynthesis; chorismate from D-erythrose 4-phosphate and phosphoenolpyruvate: step 6/7. Its function is as follows. Catalyzes the transfer of the enolpyruvyl moiety of phosphoenolpyruvate (PEP) to the 5-hydroxyl of shikimate-3-phosphate (S3P) to produce enolpyruvyl shikimate-3-phosphate and inorganic phosphate. The polypeptide is 3-phosphoshikimate 1-carboxyvinyltransferase (Photorhabdus laumondii subsp. laumondii (strain DSM 15139 / CIP 105565 / TT01) (Photorhabdus luminescens subsp. laumondii)).